Consider the following 654-residue polypeptide: Bifunctional polymyxin resistance protein ArnA (654 aa).

The tract at residues 1-303 is formyltransferase ArnAFT; the sequence is MKVIVFAYHE…NISRIKGKKL (303 aa). His-105 acts as the Proton donor; for formyltransferase activity in catalysis. (6R)-10-formyltetrahydrofolate is bound at residue 137–141; it reads TKKID. The tract at residues 313–654 is dehydrogenase ArnADH; that stretch reads NLKKILILGV…INFFINNNTS (342 aa). Residues Asp-346 and 367-368 each bind NAD(+); that span reads DI. Residues Ala-392, Tyr-397, and 431 to 432 each bind UDP-alpha-D-glucuronate; that span reads TS. Glu-433 functions as the Proton acceptor; for decarboxylase activity in the catalytic mechanism. Residues Arg-459, Asn-491, 532–534, and Tyr-612 each bind UDP-alpha-D-glucuronate; that span reads QKR. Arg-618 serves as the catalytic Proton donor; for decarboxylase activity.

It in the N-terminal section; belongs to the Fmt family. UDP-L-Ara4N formyltransferase subfamily. In the C-terminal section; belongs to the NAD(P)-dependent epimerase/dehydratase family. UDP-glucuronic acid decarboxylase subfamily. In terms of assembly, homohexamer, formed by a dimer of trimers.

The catalysed reaction is UDP-alpha-D-glucuronate + NAD(+) = UDP-beta-L-threo-pentopyranos-4-ulose + CO2 + NADH. It carries out the reaction UDP-4-amino-4-deoxy-beta-L-arabinose + (6R)-10-formyltetrahydrofolate = UDP-4-deoxy-4-formamido-beta-L-arabinose + (6S)-5,6,7,8-tetrahydrofolate + H(+). The protein operates within nucleotide-sugar biosynthesis; UDP-4-deoxy-4-formamido-beta-L-arabinose biosynthesis; UDP-4-deoxy-4-formamido-beta-L-arabinose from UDP-alpha-D-glucuronate: step 1/3. It participates in nucleotide-sugar biosynthesis; UDP-4-deoxy-4-formamido-beta-L-arabinose biosynthesis; UDP-4-deoxy-4-formamido-beta-L-arabinose from UDP-alpha-D-glucuronate: step 3/3. Its pathway is bacterial outer membrane biogenesis; lipopolysaccharide biosynthesis. Functionally, bifunctional enzyme that catalyzes the oxidative decarboxylation of UDP-glucuronic acid (UDP-GlcUA) to UDP-4-keto-arabinose (UDP-Ara4O) and the addition of a formyl group to UDP-4-amino-4-deoxy-L-arabinose (UDP-L-Ara4N) to form UDP-L-4-formamido-arabinose (UDP-L-Ara4FN). The modified arabinose is attached to lipid A and is required for resistance to polymyxin and cationic antimicrobial peptides. This chain is Bifunctional polymyxin resistance protein ArnA, found in Wigglesworthia glossinidia brevipalpis.